The chain runs to 648 residues: 1-deoxy-D-xylulose-5-phosphate synthase (648 aa).

Residues His72 and 113–115 (GHA) each bind thiamine diphosphate. A Mg(2+)-binding site is contributed by Asp144. Thiamine diphosphate-binding positions include 145 to 146 (GA), Asn173, and Glu363. Asn173 serves as a coordination point for Mg(2+).

The protein belongs to the transketolase family. DXPS subfamily. As to quaternary structure, homodimer. Mg(2+) is required as a cofactor. The cofactor is thiamine diphosphate.

The enzyme catalyses D-glyceraldehyde 3-phosphate + pyruvate + H(+) = 1-deoxy-D-xylulose 5-phosphate + CO2. Its pathway is metabolic intermediate biosynthesis; 1-deoxy-D-xylulose 5-phosphate biosynthesis; 1-deoxy-D-xylulose 5-phosphate from D-glyceraldehyde 3-phosphate and pyruvate: step 1/1. Catalyzes the acyloin condensation reaction between C atoms 2 and 3 of pyruvate and glyceraldehyde 3-phosphate to yield 1-deoxy-D-xylulose-5-phosphate (DXP). The chain is 1-deoxy-D-xylulose-5-phosphate synthase from Symbiobacterium thermophilum (strain DSM 24528 / JCM 14929 / IAM 14863 / T).